The sequence spans 763 residues: Ribonucleoside-diphosphate reductase subunit alpha (763 aa).

The ATP-cone domain occupies 5-95 (LFVTKRNGKK…IFHLRKKAYG (91 aa)). ATP is bound by residues lysine 9, 15–21 (EKINLDK), threonine 55, and lysine 91. Residue threonine 209 participates in GDP binding. Cysteine 225 and cysteine 462 are joined by a disulfide. Residues 232–234 (DNL), arginine 262, and arginine 269 contribute to the dTTP site. Asparagine 437 provides a ligand contact to GDP. Asparagine 437 functions as the Proton acceptor in the catalytic mechanism. Cysteine 439 acts as the Cysteine radical intermediate in catalysis. GDP is bound by residues glutamate 441 and 623 to 625 (ETS). The active-site Proton acceptor is glutamate 441.

Belongs to the ribonucleoside diphosphate reductase large chain family. In terms of assembly, tetramer of two alpha and two beta subunits.

The enzyme catalyses a 2'-deoxyribonucleoside 5'-diphosphate + [thioredoxin]-disulfide + H2O = a ribonucleoside 5'-diphosphate + [thioredoxin]-dithiol. With respect to regulation, under complex allosteric control mediated by deoxynucleoside triphosphates and ATP binding to separate specificity and activation sites on the alpha subunit. The type of nucleotide bound at the specificity site determines substrate preference. It seems probable that ATP makes the enzyme reduce CDP and UDP, dGTP favors ADP reduction and dTTP favors GDP reduction. Stimulated by ATP and inhibited by dATP binding to the activity site. Provides the precursors necessary for DNA synthesis. Catalyzes the biosynthesis of deoxyribonucleotides from the corresponding ribonucleotides. The polypeptide is Ribonucleoside-diphosphate reductase subunit alpha (nrdA) (Buchnera aphidicola subsp. Schizaphis graminum (strain Sg)).